Consider the following 280-residue polypeptide: Probable endonuclease 4 (280 aa).

Zn(2+) contacts are provided by H69, H109, E145, D179, H182, H216, D229, H231, and E261.

It belongs to the AP endonuclease 2 family. Zn(2+) is required as a cofactor.

The enzyme catalyses Endonucleolytic cleavage to 5'-phosphooligonucleotide end-products.. Endonuclease IV plays a role in DNA repair. It cleaves phosphodiester bonds at apurinic or apyrimidinic (AP) sites, generating a 3'-hydroxyl group and a 5'-terminal sugar phosphate. This Erwinia tasmaniensis (strain DSM 17950 / CFBP 7177 / CIP 109463 / NCPPB 4357 / Et1/99) protein is Probable endonuclease 4.